Reading from the N-terminus, the 443-residue chain is Protein FAM83A (443 aa).

Residues Asp311–Ser403 form a disordered region. Over residues Ser315–Asn326 the composition is skewed to polar residues. 2 stretches are compositionally biased toward low complexity: residues Thr327–Ser344 and Ser388–Tyr399.

It belongs to the FAM83 family.

It localises to the cytoplasm. Functionally, may function in the epidermal growth factor receptor/EGFR signaling pathway. This Xenopus laevis (African clawed frog) protein is Protein FAM83A.